The following is a 236-amino-acid chain: Large ribosomal subunit protein uL3 (236 aa).

The tract at residues 139 to 163 (ARDSSTTHEHHRHVGAIGQRKTPGK) is disordered.

Belongs to the universal ribosomal protein uL3 family. In terms of assembly, part of the 50S ribosomal subunit. Forms a cluster with proteins L14 and L19.

Functionally, one of the primary rRNA binding proteins, it binds directly near the 3'-end of the 23S rRNA, where it nucleates assembly of the 50S subunit. The sequence is that of Large ribosomal subunit protein uL3 from Anaeromyxobacter sp. (strain Fw109-5).